A 420-amino-acid chain; its full sequence is Isocitrate dehydrogenase [NADP] (420 aa).

NADP(+)-binding positions include 75–77 and Arg82; that span reads TIT. Thr77 lines the substrate pocket. Substrate contacts are provided by residues 94–100, Arg109, and Arg132; that span reads SPNGTIR. Asp252 serves as a coordination point for Mn(2+). Lys260 contributes to the NADP(+) binding site. A Mn(2+)-binding site is contributed by Asp275. NADP(+) is bound by residues 310–315 and Asn328; that span reads GTVTRH.

Belongs to the isocitrate and isopropylmalate dehydrogenases family. It depends on Mg(2+) as a cofactor. Mn(2+) serves as cofactor.

It carries out the reaction D-threo-isocitrate + NADP(+) = 2-oxoglutarate + CO2 + NADPH. May function in the production of NADPH for fatty acid and sterol synthesis. This Saccharomyces cerevisiae (strain ATCC 204508 / S288c) (Baker's yeast) protein is Isocitrate dehydrogenase [NADP] (IDP3).